A 379-amino-acid polypeptide reads, in one-letter code: Alcohol dehydrogenase 2 (379 aa).

Cysteine 48 contacts Zn(2+). An NAD(+)-binding site is contributed by 49–53; sequence HTDML. Zn(2+) is bound by residues histidine 69, cysteine 100, cysteine 103, cysteine 106, cysteine 114, and cysteine 178. NAD(+) is bound by residues 203–208, aspartate 227, lysine 232, 275–277, 298–300, and 321–323; these read GLGAVG, TGI, IGA, and TTF.

This sequence belongs to the zinc-containing alcohol dehydrogenase family. Class-IV subfamily. As to quaternary structure, homodimer. It depends on Zn(2+) as a cofactor. As to expression, expressed in flowers and disk florets.

The enzyme catalyses (R,R)-chrysanthemol + NAD(+) = (1R,3R)-chrysanthemal + NADH + H(+). It catalyses the reaction nerol + NAD(+) = neral + NADH + H(+). The catalysed reaction is (S)-(-)-citronellol + NAD(+) = (S)-(-)-citronellal + NADH + H(+). It carries out the reaction perillyl alcohol + NAD(+) = perillyl aldehyde + NADH + H(+). The enzyme catalyses (6E)-8-hydroxygeraniol + NAD(+) = (6E)-8-hydroxygeranial + NADH + H(+). It catalyses the reaction (2E)-geraniol + NAD(+) = (2E)-geranial + NADH + H(+). The protein operates within isoprenoid biosynthesis. Its function is as follows. Component of the monoterpenoid pyrethrins biosynthesis; pyrethrins are widely used plant-derived pesticide. Mediates the conversion of trans-chrysanthemol into trans-chrysanthemal. This is Alcohol dehydrogenase 2 from Tanacetum cinerariifolium (Dalmatian daisy).